Consider the following 477-residue polypeptide: Ribulose bisphosphate carboxylase large chain (477 aa).

Residues 1–2 (MS) constitute a propeptide that is removed on maturation. Pro3 carries the N-acetylproline modification. The residue at position 14 (Lys14) is an N6,N6,N6-trimethyllysine. Substrate contacts are provided by Asn123 and Thr173. The active-site Proton acceptor is the Lys175. Residue Lys177 participates in substrate binding. Lys201, Asp203, and Glu204 together coordinate Mg(2+). Residue Lys201 is modified to N6-carboxylysine. Catalysis depends on His294, which acts as the Proton acceptor. The substrate site is built by Arg295, His327, and Ser379.

Belongs to the RuBisCO large chain family. Type I subfamily. Heterohexadecamer of 8 large chains and 8 small chains; disulfide-linked. The disulfide link is formed within the large subunit homodimers. Mg(2+) is required as a cofactor. In terms of processing, the disulfide bond which can form in the large chain dimeric partners within the hexadecamer appears to be associated with oxidative stress and protein turnover.

It is found in the plastid. It localises to the chloroplast. The catalysed reaction is 2 (2R)-3-phosphoglycerate + 2 H(+) = D-ribulose 1,5-bisphosphate + CO2 + H2O. It catalyses the reaction D-ribulose 1,5-bisphosphate + O2 = 2-phosphoglycolate + (2R)-3-phosphoglycerate + 2 H(+). Its function is as follows. RuBisCO catalyzes two reactions: the carboxylation of D-ribulose 1,5-bisphosphate, the primary event in carbon dioxide fixation, as well as the oxidative fragmentation of the pentose substrate in the photorespiration process. Both reactions occur simultaneously and in competition at the same active site. This is Ribulose bisphosphate carboxylase large chain from Atropa belladonna (Belladonna).